Reading from the N-terminus, the 374-residue chain is MGLLVFVRNLLLALCLFLVLGFLYYSAWKLHLLQWEDSNSLLLSLDSAGQTLGTEYDRLGFLLKLDSKLPAELATKYANFSEGACKPGYASAMMTAIFPRFSKPAPMFLDDSFRKWARIREFVPPFGIKGQDNLIKAILSVTKEYRLTPALDSLHCRRCIIVGNGGVLANKSLGSRIDDYDIVIRLNSAPVKGFERDVGSKTTLRITYPEGAMQRPEQYERDSLFVLAGFKWQDFKWLKYIVYKERVSASDGFWKSVATRVPKEPPEIRILNPYFIQEAAFTLIGLPFNNGLMGRGNIPTLGSVAVTMALHGCDEVAVAGFGYDMNTPNAPLHYYETVRMAAIKESWTHNIQREKEFLRKLVKARVITDLSSGI.

The Cytoplasmic portion of the chain corresponds to 1-8 (MGLLVFVR). A helical; Signal-anchor for type II membrane protein transmembrane segment spans residues 9 to 28 (NLLLALCLFLVLGFLYYSAW). At 29–374 (KLHLLQWEDS…RVITDLSSGI (346 aa)) the chain is on the lumenal side. Asn-79 and Asn-170 each carry an N-linked (GlcNAc...) asparagine glycan. Cys-159 and Cys-313 form a disulfide bridge.

The protein belongs to the glycosyltransferase 29 family. As to expression, found in all tissues tested. High expression found in brain, liver, kidney, colon, heart and spleen.

It is found in the membrane. Its subcellular location is the golgi apparatus. It localises to the golgi stack membrane. The catalysed reaction is a beta-D-galactosyl-(1-&gt;4)-N-acetyl-beta-D-glucosaminyl derivative + CMP-N-acetyl-beta-neuraminate = an N-acetyl-alpha-neuraminyl-(2-&gt;3)-beta-D-galactosyl-(1-&gt;4)-N-acetyl-beta-D-glucosaminyl derivative + CMP + H(+). Its pathway is protein modification; protein glycosylation. In terms of biological role, catalyzes the formation of the NeuAc-alpha-2,3-Gal-beta-1,4-GlcNAc-, NeuAc-alpha-2,3-Gal-beta-1,3-GlcNAc- and NeuAc-alpha-2,3-Gal-beta-1,3-GalNAc- sequences found in terminal carbohydrate groups of glycoproteins and glycolipids. The highest activity is toward Gal-beta-1,3-GlcNAc and the lowest toward Gal-beta-1,3-GalNAc. The polypeptide is CMP-N-acetylneuraminate-beta-1,4-galactoside alpha-2,3-sialyltransferase (St3gal3) (Mus musculus (Mouse)).